The chain runs to 471 residues: Cysteine--tRNA ligase (471 aa).

Residue Cys29 coordinates Zn(2+). A 'HIGH' region motif is present at residues 31-41; that stretch reads PTVYNYIHIGN. Zn(2+) is bound by residues Cys209, His234, and Glu238. Positions 266–270 match the 'KMSKS' region motif; it reads KMSKS. Lys269 is a binding site for ATP.

The protein belongs to the class-I aminoacyl-tRNA synthetase family. Monomer. It depends on Zn(2+) as a cofactor.

It localises to the cytoplasm. It carries out the reaction tRNA(Cys) + L-cysteine + ATP = L-cysteinyl-tRNA(Cys) + AMP + diphosphate. The sequence is that of Cysteine--tRNA ligase from Listeria innocua serovar 6a (strain ATCC BAA-680 / CLIP 11262).